Reading from the N-terminus, the 188-residue chain is MPKASDIKKNQAIEHNGKVYLIKDVYKSTSQGRAGGSIYRVRMYEVATGLKVDESFKADEMITLADFSRHQATFSYVDGDEYVFMDNEDYTPYNLHKDAIAEELPFVTETTEGIQVFTVNGQPVAIDLPASVDLVIVETDPSIKGASATARTKPATLSTGLVIQVPEYIASGEKIKVSTVDHKFMSRA.

This sequence belongs to the elongation factor P family.

This Saccharophagus degradans (strain 2-40 / ATCC 43961 / DSM 17024) protein is Elongation factor P-like protein.